A 118-amino-acid polypeptide reads, in one-letter code: NADH-quinone oxidoreductase subunit A 2 (118 aa).

The next 3 helical transmembrane spans lie at Tyr-5 to Phe-25, Leu-62 to Val-82, and Leu-87 to Val-107.

It belongs to the complex I subunit 3 family. In terms of assembly, NDH-1 is composed of 14 different subunits. Subunits NuoA, H, J, K, L, M, N constitute the membrane sector of the complex.

It localises to the cell inner membrane. The catalysed reaction is a quinone + NADH + 5 H(+)(in) = a quinol + NAD(+) + 4 H(+)(out). Functionally, NDH-1 shuttles electrons from NADH, via FMN and iron-sulfur (Fe-S) centers, to quinones in the respiratory chain. The immediate electron acceptor for the enzyme in this species is believed to be ubiquinone. Couples the redox reaction to proton translocation (for every two electrons transferred, four hydrogen ions are translocated across the cytoplasmic membrane), and thus conserves the redox energy in a proton gradient. This Citrifermentans bemidjiense (strain ATCC BAA-1014 / DSM 16622 / JCM 12645 / Bem) (Geobacter bemidjiensis) protein is NADH-quinone oxidoreductase subunit A 2.